A 242-amino-acid polypeptide reads, in one-letter code: Host range factor p28 (242 aa).

In terms of domain architecture, KilA-N spans 21–131 (YIDEPNDIRL…QSILRGLVNW (111 aa)). The RING-type zinc finger occupies 173–226 (CGICYEVVYSKRLENDRYFGLLDSCNHIFCITCINIWHRTRRETGALDNCPICR).

The protein belongs to the orthopoxvirus OPG021 family.

It is found in the host cytoplasm. It carries out the reaction S-ubiquitinyl-[E2 ubiquitin-conjugating enzyme]-L-cysteine + [acceptor protein]-L-lysine = [E2 ubiquitin-conjugating enzyme]-L-cysteine + N(6)-ubiquitinyl-[acceptor protein]-L-lysine.. In terms of biological role, RING-finger E3 ubiquitin ligase which catalyzes the formation of both 'Lys-48'- and 'Lys-63'-linked polyubiquitin chains. Plays an important role in virulence by acting as an anti-apoptotic factor. The protein is Host range factor p28 (OPG021) of Cynomys gunnisoni (Gunnison's prairie dog).